A 1086-amino-acid chain; its full sequence is WD repeat-containing protein 64 (1086 aa).

9 WD repeats span residues 129 to 168, 170 to 199, 321 to 360, 364 to 403, 411 to 448, 453 to 492, 498 to 537, 560 to 602, and 642 to 683; these read RRRDVIKCIVKVPQLDLLITASQKGLITVFNSQDTSWITG, DYLGQLKRIVATTERTIIVWDYKAQGSSQE, AMPRGANSFCYCGKANVIVTGGDDKVLRLWHPNISTKPVG, GHMFSITEIVSNEKEQHVISLSSAKVFRVWDIQTLSVLQV, PGDMQIYSMVYDANHGMLITGSGVIDMYPLTRMIQDTK, THEREVNVTLYNKYFHQVLTVCSESVIKVWELETGLQIYQ, GLSIELTCAAIDESGYLFATGAYNGTVKIWDFGSGQEMKM, QVKQ…PYLQ, and IVDV…VKEI. The interval 724–749 is disordered; sequence ICSSTQCDSSKGPQSSKGSKQSIHDA. The segment covering 732–744 has biased composition (low complexity); that stretch reads SSKGPQSSKGSKQ. 3 WD repeats span residues 765–806, 809–850, and 863–902; these read ASRK…KDML, TKHS…DPPH, and AHSLEIIQVIYVEEKQLVLTASIDGSVRIWNSTSGHYCGY. The disordered stretch occupies residues 1047-1069; that stretch reads DKVKREEAPEMTEGSRRKSLKRN. The segment covering 1049–1062 has biased composition (basic and acidic residues); it reads VKREEAPEMTEGSR.

This Mus musculus (Mouse) protein is WD repeat-containing protein 64 (Wdr64).